The sequence spans 639 residues: Probable serine/threonine-protein kinase DDB_G0282777 (639 aa).

Positions 7–122 (LKENKESLKD…EDLKSIILTS (116 aa)) form a coiled coil. Positions 233-588 (MHMVGDIKKG…SNNNQNHTNI (356 aa)) constitute a Protein kinase domain. Residues 239–247 (IKKGSISSD) and Lys284 each bind ATP. Residue Asp439 is the Proton acceptor of the active site. The tract at residues 601 to 639 (NTLETSTTNPNTNTTTSDTNTSTTSTTNTNTTTSNTITA) is disordered.

Belongs to the protein kinase superfamily. Ser/Thr protein kinase family.

The catalysed reaction is L-seryl-[protein] + ATP = O-phospho-L-seryl-[protein] + ADP + H(+). The enzyme catalyses L-threonyl-[protein] + ATP = O-phospho-L-threonyl-[protein] + ADP + H(+). In Dictyostelium discoideum (Social amoeba), this protein is Probable serine/threonine-protein kinase DDB_G0282777.